A 103-amino-acid polypeptide reads, in one-letter code: MESEEMLAGGLTEPRPATPEIQEIANKVKPQLEEKTKKTYEKFEAIIYRSQVVAGTNYYIKVHVGGNSYVHIIVFQNLPQLNEPLKLIGYQVDKTKDDELTGF.

Residues 1-20 (MESEEMLAGGLTEPRPATPE) form a disordered region. The Secondary area of contact motif lies at 51–55 (QVVAG).

This sequence belongs to the cystatin family.

It localises to the cytoplasm. Its function is as follows. This is an intracellular thiol proteinase inhibitor. This chain is Cystatin-A8, found in Sus scrofa (Pig).